The primary structure comprises 317 residues: Annexin A13 (317 aa).

Gly-2 carries the N-myristoyl glycine lipid modification. Annexin repeat units follow at residues 15 to 86 (FDAD…ALLD), 87 to 158 (RPNE…SLLQ), 170 to 242 (ELAG…TIVR), and 246 to 317 (DLEG…ALLH).

This sequence belongs to the annexin family. Monomer and homodimer. In terms of tissue distribution, detected on the tips of microvilli in small intestine (at protein level).

Its subcellular location is the apical cell membrane. It localises to the cell membrane. It is found in the cytoplasmic vesicle. Binds to membranes enriched in phosphatidylserine or phosphatidylglycerol in a calcium-dependent manner. Half-maximal membrane binding requires about 60 uM calcium. Does not bind to membranes that lack phospholipids with an acidic headgroup. This is Annexin A13 (Anxa13) from Mus musculus (Mouse).